The chain runs to 565 residues: Sulfite reductase [NADPH] hemoprotein beta-component (565 aa).

Residues cysteine 429, cysteine 435, cysteine 474, and cysteine 478 each contribute to the [4Fe-4S] cluster site. Cysteine 478 is a siroheme binding site.

This sequence belongs to the nitrite and sulfite reductase 4Fe-4S domain family. Alpha(8)-beta(8). The alpha component is a flavoprotein, the beta component is a hemoprotein. It depends on siroheme as a cofactor. [4Fe-4S] cluster serves as cofactor.

It catalyses the reaction hydrogen sulfide + 3 NADP(+) + 3 H2O = sulfite + 3 NADPH + 4 H(+). The protein operates within sulfur metabolism; hydrogen sulfide biosynthesis; hydrogen sulfide from sulfite (NADPH route): step 1/1. Component of the sulfite reductase complex that catalyzes the 6-electron reduction of sulfite to sulfide. This is one of several activities required for the biosynthesis of L-cysteine from sulfate. This Shewanella baltica (strain OS155 / ATCC BAA-1091) protein is Sulfite reductase [NADPH] hemoprotein beta-component.